Consider the following 53-residue polypeptide: Toxin CjTL7 (53 aa).

A signal peptide spans 1-22; sequence MMIKVLLLLSSALVLFTPEAEG. Trp51 bears the Tryptophan amide mark.

Contains 4 disulfide bonds.

It localises to the secreted. The protein localises to the nematocyst. In terms of biological role, in vivo, only causes a weak change in behavior in shrimps (C.multidentata) (slight twitching of the walking legs), but no lethal effect is observed. No activity is observed when injected into fly larvae (M.domestica). The sequence is that of Toxin CjTL7 from Epiactis japonica (Sea anemone).